A 432-amino-acid polypeptide reads, in one-letter code: tRNA(Ile)-lysidine synthase (432 aa).

19 to 24 (STGIDS) serves as a coordination point for ATP.

This sequence belongs to the tRNA(Ile)-lysidine synthase family.

Its subcellular location is the cytoplasm. The enzyme catalyses cytidine(34) in tRNA(Ile2) + L-lysine + ATP = lysidine(34) in tRNA(Ile2) + AMP + diphosphate + H(+). In terms of biological role, ligates lysine onto the cytidine present at position 34 of the AUA codon-specific tRNA(Ile) that contains the anticodon CAU, in an ATP-dependent manner. Cytidine is converted to lysidine, thus changing the amino acid specificity of the tRNA from methionine to isoleucine. The sequence is that of tRNA(Ile)-lysidine synthase from Staphylococcus epidermidis (strain ATCC 35984 / DSM 28319 / BCRC 17069 / CCUG 31568 / BM 3577 / RP62A).